Here is a 585-residue protein sequence, read N- to C-terminus: MKCANAAALLFFVLCDIGVHGGEIVAELLHSNVTVKWQTDYERQTVDFSIWFGAKTPDLLFLGFSDFGDMNSSDVLMYDNVKREIMDSYTNRDYKIIPDLSQDFQQLRRRKDHFVVRRKLTTCDSRDYAFQRGTTQFYIAASFGYRNLVDIRDKKWILDKKFGKVIEGPTDQPSTDEGVSSLERDVQLVIVNSNSPDPVPNVETTYECIIRKMPFDTVHKTYHIVRMEPYITPGNEHLVHHMEVFLCRDEVEEWSGNCNDPKKPKKSKSCSHVIAAWAMGEGPIHYPREAGLPIGGKGKNEYVMVEIHYNNPELHKGVMDTSGFQFYVTGLLRIYDAGIMELGLIYSDANSVPPNQKAWAMNGYCPSQCTQNLPEEGINIFASQMHAHLTGRKLWTSQYRDGVQIGDVNRDEHYSPHWQHLQQLRPMVRVMPGDTLVTTCVYDTRRRSNVTFGGYGITDEMCVNYIYYYPASEVEVCKSAISNSTLRAYFSQRHGMDGKTMKISDMYNGVKDWSNGVDEEFYNVLNVGNVNMNCLKSNGESFEFKSKDPRQGWENMARPRLFSGSFIRTRDRFQCPAINDMINFE.

The N-terminal stretch at 1–21 (MKCANAAALLFFVLCDIGVHG) is a signal peptide. The region spanning 31-142 (SNVTVKWQTD…GTTQFYIAAS (112 aa)) is the DOMON domain. Residues Asn-32 and Asn-71 are each glycosylated (N-linked (GlcNAc...) asparagine). Tyr-206 is an active-site residue. 2 cysteine pairs are disulfide-bonded: Cys-208/Cys-258 and Cys-247/Cys-270. Cu(2+) contacts are provided by His-240 and His-241. Residues His-308, His-386, and His-388 each coordinate Cu(2+). Intrachain disulfides connect Cys-365/Cys-477, Cys-369/Cys-534, and Cys-440/Cys-462. His-386 is a catalytic residue. N-linked (GlcNAc...) asparagine glycosylation occurs at Asn-449. Met-461 contributes to the Cu(2+) binding site. Asn-483 is a glycosylation site (N-linked (GlcNAc...) asparagine).

Belongs to the copper type II ascorbate-dependent monooxygenase family. Cu(2+) serves as cofactor.

Its subcellular location is the cytoplasmic vesicle. The protein resides in the secretory vesicle. It is found in the synaptic vesicle. The enzyme catalyses tyramine + L-ascorbate + O2 = (R)-octopamine + L-dehydroascorbate + H2O. Its function is as follows. Catalyzes the hydroxylation of tyramine into octopamine, a neurotransmitter involved in pharyngeal pumping and egg laying. This Caenorhabditis briggsae protein is Tyramine beta-hydroxylase (tbh-1).